The primary structure comprises 373 residues: Carnosine N-methyltransferase (373 aa).

Glutamine 110, arginine 113, glycine 154, glutamate 175, aspartate 242, phenylalanine 243, and cysteine 262 together coordinate S-adenosyl-L-methionine. Aspartate 266 contacts carnosine. Tyrosine 274 lines the S-adenosyl-L-methionine pocket. Residues histidine 297 and tyrosine 356 each contribute to the carnosine site.

Belongs to the carnosine N-methyltransferase family.

It localises to the cytoplasm. The protein localises to the nucleus. The catalysed reaction is carnosine + S-adenosyl-L-methionine = anserine + S-adenosyl-L-homocysteine + H(+). Functionally, N-methyltransferase that mediates the formation of anserine (beta-alanyl-N(Pi)-methyl-L-histidine) from carnosine. Also methylates other L-histidine-containing di- and tripeptides such as Gly-Gly-His, Gly-His and homocarnosine (GABA-His). The sequence is that of Carnosine N-methyltransferase from Schizosaccharomyces pombe (strain 972 / ATCC 24843) (Fission yeast).